The following is a 57-amino-acid chain: Enolase (57 aa).

The active-site Proton donor is the glutamate 25.

This sequence belongs to the enolase family. Mg(2+) is required as a cofactor.

It localises to the cytoplasm. The protein localises to the secreted. The protein resides in the cell surface. It carries out the reaction (2R)-2-phosphoglycerate = phosphoenolpyruvate + H2O. It functions in the pathway carbohydrate degradation; glycolysis; pyruvate from D-glyceraldehyde 3-phosphate: step 4/5. Catalyzes the reversible conversion of 2-phosphoglycerate (2-PG) into phosphoenolpyruvate (PEP). It is essential for the degradation of carbohydrates via glycolysis. This chain is Enolase, found in Clostridioides difficile (Peptoclostridium difficile).